The following is a 569-amino-acid chain: Serine/threonine-protein kinase gad8 (569 aa).

Residues 19–63 form a disordered region; sequence GLNSGGSSFTRGLKNSTLSSTSSRKSSDEKSRKSSEDKRSPQSTV. Residues 31–42 are compositionally biased toward low complexity; sequence LKNSTLSSTSSR. Positions 43–58 are enriched in basic and acidic residues; that stretch reads KSSDEKSRKSSEDKRS. The C2 domain occupies 45–202; it reads SDEKSRKSSE…IVNKLTDEWV (158 aa). The 256-residue stretch at 230 to 485 folds into the Protein kinase domain; sequence FELLKVVGKG…AQEIKNHPFF (256 aa). Residues 236-244 and Lys259 contribute to the ATP site; that span reads VGKGSFGKV. Asp353 (proton acceptor) is an active-site residue. Position 387 is a phosphothreonine; by ksg1 (Thr387). The AGC-kinase C-terminal domain maps to 486–557; the sequence is DDIDWKKLCA…QRPTTIDTSD (72 aa). 2 positions are modified to phosphoserine; by TORC2: Ser527 and Ser546.

The protein belongs to the protein kinase superfamily. AGC Ser/Thr protein kinase family. Post-translationally, phosphorylated by ksg1 and target of rapamycin complex 2 (TORC2), affecting the kinase activity of gad8 in a nutrient-dependent manner.

The enzyme catalyses L-seryl-[protein] + ATP = O-phospho-L-seryl-[protein] + ADP + H(+). It carries out the reaction L-threonyl-[protein] + ATP = O-phospho-L-threonyl-[protein] + ADP + H(+). Its function is as follows. Involved in a signaling module for sexual development and cell growth under stressed conditions. Required for G1 arrest under nitrogen starvation and for growth at high temperature and osmolarity. The polypeptide is Serine/threonine-protein kinase gad8 (Schizosaccharomyces pombe (strain 972 / ATCC 24843) (Fission yeast)).